The following is a 159-amino-acid chain: Aspartate carbamoyltransferase regulatory chain (159 aa).

4 residues coordinate Zn(2+): Cys-113, Cys-118, Cys-142, and Cys-145.

The protein belongs to the PyrI family. Contains catalytic and regulatory chains. Zn(2+) serves as cofactor.

In terms of biological role, involved in allosteric regulation of aspartate carbamoyltransferase. The polypeptide is Aspartate carbamoyltransferase regulatory chain (Saccharolobus islandicus (strain Y.N.15.51 / Yellowstone #2) (Sulfolobus islandicus)).